A 220-amino-acid chain; its full sequence is Superoxide dismutase [Fe] (220 aa).

4 residues coordinate Fe cation: His26, His73, Asp164, and His168.

This sequence belongs to the iron/manganese superoxide dismutase family. Homodimer. Requires Fe cation as cofactor.

It carries out the reaction 2 superoxide + 2 H(+) = H2O2 + O2. Functionally, destroys superoxide anion radicals which are normally produced within the cells and which are toxic to biological systems. This Campylobacter jejuni subsp. jejuni serotype O:2 (strain ATCC 700819 / NCTC 11168) protein is Superoxide dismutase [Fe] (sodB).